The following is a 138-amino-acid chain: Peptide methionine sulfoxide reductase MsrB (138 aa).

One can recognise a MsrB domain in the interval 15–137; that stretch reads EAEWRAQLDP…NSASLGFEPR (123 aa). Cysteine 54, cysteine 57, cysteine 103, and cysteine 106 together coordinate Zn(2+). The active-site Nucleophile is the cysteine 126.

The protein belongs to the MsrB Met sulfoxide reductase family. Requires Zn(2+) as cofactor.

It carries out the reaction L-methionyl-[protein] + [thioredoxin]-disulfide + H2O = L-methionyl-(R)-S-oxide-[protein] + [thioredoxin]-dithiol. This chain is Peptide methionine sulfoxide reductase MsrB, found in Methylibium petroleiphilum (strain ATCC BAA-1232 / LMG 22953 / PM1).